A 350-amino-acid chain; its full sequence is Quinolinate phosphoribosyltransferase [decarboxylating] 1 (350 aa).

Residues R141, 172–174, R196, K206, E239, D266, 298–300, and 319–321 contribute to the substrate site; these read TRK, SGN, and SGA.

The protein belongs to the NadC/ModD family.

The catalysed reaction is nicotinate beta-D-ribonucleotide + CO2 + diphosphate = quinolinate + 5-phospho-alpha-D-ribose 1-diphosphate + 2 H(+). It functions in the pathway alkaloid biosynthesis; nicotine biosynthesis. It participates in cofactor biosynthesis; NAD(+) biosynthesis; nicotinate D-ribonucleotide from quinolinate: step 1/1. Involved in the biosynthesis of pyridine alkaloid natural products, leading mainly to the production of anabasine, anatabine, nicotine and nornicotine, effective deterrents against herbivores with antiparasitic and pesticide properties (neurotoxins); nornicotine serves as the precursor in the synthesis of the carcinogen compound N'-nitrosonornicotine (NNN). Involved in the catabolism of quinolinic acid (QA). The protein is Quinolinate phosphoribosyltransferase [decarboxylating] 1 of Nicotiana glauca (Glaucous tobacco).